Here is a 368-residue protein sequence, read N- to C-terminus: Glucose 1-dehydrogenase 2 (368 aa).

Residue Cys-41 coordinates Zn(2+). Thr-43 contributes to the substrate binding site. Residues His-68 and Glu-69 each coordinate Zn(2+). Position 91 (Asn-91) interacts with substrate. Residues Cys-95, Cys-98, Cys-101, Cys-109, and Gln-152 each contribute to the Zn(2+) site. Substrate contacts are provided by Gln-152 and Asp-156. NADP(+) contacts are provided by residues 213–215, 279–281, 307–309, and Lys-356; these read NRR, FGF, and LDN. Asn-309 serves as a coordination point for substrate.

It belongs to the zinc-containing alcohol dehydrogenase family. Glucose 1-dehydrogenase subfamily. Requires Zn(2+) as cofactor.

It carries out the reaction D-glucose + NAD(+) = D-glucono-1,5-lactone + NADH + H(+). It catalyses the reaction D-glucose + NADP(+) = D-glucono-1,5-lactone + NADPH + H(+). Catalyzes the NAD(P)(+)-dependent oxidation of D-glucose to D-gluconate via gluconolactone. Can utilize both NAD(+) and NADP(+) as electron acceptor. Is involved in the degradation of glucose through a non-phosphorylative variant of the Entner-Doudoroff pathway. The sequence is that of Glucose 1-dehydrogenase 2 from Saccharolobus solfataricus (strain ATCC 35092 / DSM 1617 / JCM 11322 / P2) (Sulfolobus solfataricus).